The sequence spans 325 residues: GMP reductase (325 aa).

The active-site Thioimidate intermediate is the Cys174. 203–226 (LIADGGIRTHGDIAKSIRFGASMV) contacts NADP(+).

This sequence belongs to the IMPDH/GMPR family. GuaC type 2 subfamily.

It carries out the reaction IMP + NH4(+) + NADP(+) = GMP + NADPH + 2 H(+). Catalyzes the irreversible NADPH-dependent deamination of GMP to IMP. It functions in the conversion of nucleobase, nucleoside and nucleotide derivatives of G to A nucleotides, and in maintaining the intracellular balance of A and G nucleotides. This chain is GMP reductase, found in Staphylococcus aureus (strain MRSA252).